Reading from the N-terminus, the 355-residue chain is Cobalt-precorrin-5B C(1)-methyltransferase (355 aa).

It belongs to the CbiD family.

It catalyses the reaction Co-precorrin-5B + S-adenosyl-L-methionine = Co-precorrin-6A + S-adenosyl-L-homocysteine. Its pathway is cofactor biosynthesis; adenosylcobalamin biosynthesis; cob(II)yrinate a,c-diamide from sirohydrochlorin (anaerobic route): step 6/10. Catalyzes the methylation of C-1 in cobalt-precorrin-5B to form cobalt-precorrin-6A. This Sulfolobus acidocaldarius (strain ATCC 33909 / DSM 639 / JCM 8929 / NBRC 15157 / NCIMB 11770) protein is Cobalt-precorrin-5B C(1)-methyltransferase.